Consider the following 119-residue polypeptide: Ribonuclease P protein component (119 aa).

Residues 1–20 (MLPAQHRMTRSTEFGATVSK) are disordered.

The protein belongs to the RnpA family. Consists of a catalytic RNA component (M1 or rnpB) and a protein subunit.

The enzyme catalyses Endonucleolytic cleavage of RNA, removing 5'-extranucleotides from tRNA precursor.. Functionally, RNaseP catalyzes the removal of the 5'-leader sequence from pre-tRNA to produce the mature 5'-terminus. It can also cleave other RNA substrates such as 4.5S RNA. The protein component plays an auxiliary but essential role in vivo by binding to the 5'-leader sequence and broadening the substrate specificity of the ribozyme. This is Ribonuclease P protein component from Mycolicibacterium vanbaalenii (strain DSM 7251 / JCM 13017 / BCRC 16820 / KCTC 9966 / NRRL B-24157 / PYR-1) (Mycobacterium vanbaalenii).